Here is a 396-residue protein sequence, read N- to C-terminus: Ribosomal RNA large subunit methyltransferase I (396 aa).

One can recognise a PUA domain in the interval 2-81; sequence SVRLVLAKGR…ESIDIAFFSR (80 aa).

The protein belongs to the methyltransferase superfamily. RlmI family.

Its subcellular location is the cytoplasm. The enzyme catalyses cytidine(1962) in 23S rRNA + S-adenosyl-L-methionine = 5-methylcytidine(1962) in 23S rRNA + S-adenosyl-L-homocysteine + H(+). In terms of biological role, specifically methylates the cytosine at position 1962 (m5C1962) of 23S rRNA. This Shigella flexneri serotype 5b (strain 8401) protein is Ribosomal RNA large subunit methyltransferase I.